The primary structure comprises 156 residues: Small ribosomal subunit protein uS7 (156 aa).

This sequence belongs to the universal ribosomal protein uS7 family. Part of the 30S ribosomal subunit. Contacts proteins S9 and S11.

Functionally, one of the primary rRNA binding proteins, it binds directly to 16S rRNA where it nucleates assembly of the head domain of the 30S subunit. Is located at the subunit interface close to the decoding center, probably blocks exit of the E-site tRNA. This is Small ribosomal subunit protein uS7 from Rhodopseudomonas palustris (strain BisA53).